A 311-amino-acid chain; its full sequence is tRNA-cytidine(32) 2-sulfurtransferase (311 aa).

The PP-loop motif motif lies at 47–52 (SGGKDS). Residues cysteine 122, cysteine 125, and cysteine 213 each coordinate [4Fe-4S] cluster.

It belongs to the TtcA family. In terms of assembly, homodimer. It depends on Mg(2+) as a cofactor. The cofactor is [4Fe-4S] cluster.

Its subcellular location is the cytoplasm. It catalyses the reaction cytidine(32) in tRNA + S-sulfanyl-L-cysteinyl-[cysteine desulfurase] + AH2 + ATP = 2-thiocytidine(32) in tRNA + L-cysteinyl-[cysteine desulfurase] + A + AMP + diphosphate + H(+). The protein operates within tRNA modification. Functionally, catalyzes the ATP-dependent 2-thiolation of cytidine in position 32 of tRNA, to form 2-thiocytidine (s(2)C32). The sulfur atoms are provided by the cysteine/cysteine desulfurase (IscS) system. The chain is tRNA-cytidine(32) 2-sulfurtransferase from Klebsiella pneumoniae (strain 342).